Here is a 188-residue protein sequence, read N- to C-terminus: Crossover junction endodeoxyribonuclease RuvC (188 aa).

Residues D14, E74, and D149 contribute to the active site. Residues D14, E74, and D149 each coordinate Mg(2+).

This sequence belongs to the RuvC family. In terms of assembly, homodimer which binds Holliday junction (HJ) DNA. The HJ becomes 2-fold symmetrical on binding to RuvC with unstacked arms; it has a different conformation from HJ DNA in complex with RuvA. In the full resolvosome a probable DNA-RuvA(4)-RuvB(12)-RuvC(2) complex forms which resolves the HJ. Mg(2+) is required as a cofactor.

Its subcellular location is the cytoplasm. The enzyme catalyses Endonucleolytic cleavage at a junction such as a reciprocal single-stranded crossover between two homologous DNA duplexes (Holliday junction).. In terms of biological role, the RuvA-RuvB-RuvC complex processes Holliday junction (HJ) DNA during genetic recombination and DNA repair. Endonuclease that resolves HJ intermediates. Cleaves cruciform DNA by making single-stranded nicks across the HJ at symmetrical positions within the homologous arms, yielding a 5'-phosphate and a 3'-hydroxyl group; requires a central core of homology in the junction. The consensus cleavage sequence is 5'-(A/T)TT(C/G)-3'. Cleavage occurs on the 3'-side of the TT dinucleotide at the point of strand exchange. HJ branch migration catalyzed by RuvA-RuvB allows RuvC to scan DNA until it finds its consensus sequence, where it cleaves and resolves the cruciform DNA. This is Crossover junction endodeoxyribonuclease RuvC from Bacteroides fragilis (strain ATCC 25285 / DSM 2151 / CCUG 4856 / JCM 11019 / LMG 10263 / NCTC 9343 / Onslow / VPI 2553 / EN-2).